A 464-amino-acid chain; its full sequence is Tyrosine--tRNA ligase, mitochondrial (464 aa).

Residue Tyr61 coordinates L-tyrosine. Residue Asp65 participates in ATP binding. A 'HIGH' region motif is present at residues 66 to 75; the sequence is PTADSLHVGN. L-tyrosine is bound by residues Asp105, Tyr209, Gln213, Asp216, and Gln235. The short motif at 270–274 is the 'KMSKS' region element; the sequence is KFGKS. Lys273 contributes to the ATP binding site.

It belongs to the class-I aminoacyl-tRNA synthetase family. Homodimer.

The protein localises to the mitochondrion matrix. It carries out the reaction tRNA(Tyr) + L-tyrosine + ATP = L-tyrosyl-tRNA(Tyr) + AMP + diphosphate + H(+). Its function is as follows. Catalyzes the attachment of tyrosine to tRNA(Tyr) in a two-step reaction: tyrosine is first activated by ATP to form Tyr-AMP and then transferred to the acceptor end of tRNA(Tyr). The sequence is that of Tyrosine--tRNA ligase, mitochondrial from Drosophila melanogaster (Fruit fly).